Here is a 306-residue protein sequence, read N- to C-terminus: Curved DNA-binding protein (306 aa).

The region spanning 5-69 (DYYAIMGVKP…QRRAEYDQLW (65 aa)) is the J domain.

Its subcellular location is the cytoplasm. It is found in the nucleoid. Functionally, DNA-binding protein that preferentially recognizes a curved DNA sequence. It is probably a functional analog of DnaJ; displays overlapping activities with DnaJ, but functions under different conditions, probably acting as a molecular chaperone in an adaptive response to environmental stresses other than heat shock. Lacks autonomous chaperone activity; binds native substrates and targets them for recognition by DnaK. Its activity is inhibited by the binding of CbpM. The polypeptide is Curved DNA-binding protein (Salmonella arizonae (strain ATCC BAA-731 / CDC346-86 / RSK2980)).